The sequence spans 283 residues: MLIIETLPLLRQQIRRLRMEGKRVALVPTMGNLHNGHMKLVDEAKARADVVVVSIFVNPMQFDRPEDLARYPRTLQEDCEKLNKRKVDLVFAPSVKEIYPNGTETHTYVDVPGLSTMLEGASRPGHFRGVSTIVSKLFNLVQPDIACFGEKDFQQLALIRKMVADMGFDIEIVGVPIMRAKDGLALSSRNGYLTAEQRKIAPGLYKVLSSIADKLQAGERDLDEIITIAGQELNEKGFRADDIQIRDADTLLEVSETSKRAVILVAAWLGDARLIDNKMVELA.

Residue 30-37 participates in ATP binding; it reads MGNLHNGH. Residue H37 is the Proton donor of the active site. Q61 serves as a coordination point for (R)-pantoate. Q61 is a binding site for beta-alanine. Residue 149–152 coordinates ATP; the sequence is GEKD. Q155 contributes to the (R)-pantoate binding site. An ATP-binding site is contributed by 186-189; that stretch reads LSSR.

This sequence belongs to the pantothenate synthetase family. Homodimer.

It localises to the cytoplasm. It carries out the reaction (R)-pantoate + beta-alanine + ATP = (R)-pantothenate + AMP + diphosphate + H(+). It functions in the pathway cofactor biosynthesis; (R)-pantothenate biosynthesis; (R)-pantothenate from (R)-pantoate and beta-alanine: step 1/1. Catalyzes the condensation of pantoate with beta-alanine in an ATP-dependent reaction via a pantoyl-adenylate intermediate. The chain is Pantothenate synthetase from Shigella flexneri serotype 5b (strain 8401).